The sequence spans 1109 residues: ABC transporter G family member 28 (1109 aa).

Helical transmembrane passes span Asn-5 to Gln-25 and Asn-291 to Tyr-311. Residues Gln-325 to Lys-411 form a disordered region. Basic and acidic residues predominate over residues Ser-339–Thr-357. The 243-residue stretch at Val-499 to Glu-741 folds into the ABC transporter domain. An ATP-binding site is contributed by Gly-533–Thr-540. An ABC transmembrane type-2 domain is found at Gln-859–Ala-1056. A run of 6 helical transmembrane segments spans residues Leu-879–Val-899, Phe-904–Ala-924, Thr-954–Phe-974, Val-986–Phe-1006, Pro-1008–Ser-1028, and Cys-1084–Val-1104.

The protein belongs to the ABC transporter superfamily. ABCG family. Eye pigment precursor importer (TC 3.A.1.204) subfamily.

The protein resides in the membrane. In Arabidopsis thaliana (Mouse-ear cress), this protein is ABC transporter G family member 28 (ABCG28).